We begin with the raw amino-acid sequence, 140 residues long: Large ribosomal subunit protein uL16 (140 aa).

This sequence belongs to the universal ribosomal protein uL16 family. Part of the 50S ribosomal subunit.

Its function is as follows. Binds 23S rRNA and is also seen to make contacts with the A and possibly P site tRNAs. This Onion yellows phytoplasma (strain OY-M) protein is Large ribosomal subunit protein uL16.